Here is a 419-residue protein sequence, read N- to C-terminus: Multifunctional CCA protein (419 aa).

2 residues coordinate ATP: Gly8 and Arg11. CTP-binding residues include Gly8 and Arg11. Mg(2+) is bound by residues Asp21 and Asp23. ATP is bound by residues Arg91, Arg141, and Arg144. CTP is bound by residues Arg91, Arg141, and Arg144. One can recognise an HD domain in the interval 230 to 331 (TGVHVMMVLD…VRLLERCDAL (102 aa)).

This sequence belongs to the tRNA nucleotidyltransferase/poly(A) polymerase family. Bacterial CCA-adding enzyme type 1 subfamily. Monomer. Can also form homodimers and oligomers. Mg(2+) is required as a cofactor. Requires Ni(2+) as cofactor.

It catalyses the reaction a tRNA precursor + 2 CTP + ATP = a tRNA with a 3' CCA end + 3 diphosphate. It carries out the reaction a tRNA with a 3' CCA end + 2 CTP + ATP = a tRNA with a 3' CCACCA end + 3 diphosphate. Functionally, catalyzes the addition and repair of the essential 3'-terminal CCA sequence in tRNAs without using a nucleic acid template. Adds these three nucleotides in the order of C, C, and A to the tRNA nucleotide-73, using CTP and ATP as substrates and producing inorganic pyrophosphate. tRNA 3'-terminal CCA addition is required both for tRNA processing and repair. Also involved in tRNA surveillance by mediating tandem CCA addition to generate a CCACCA at the 3' terminus of unstable tRNAs. While stable tRNAs receive only 3'-terminal CCA, unstable tRNAs are marked with CCACCA and rapidly degraded. In Paracidovorax citrulli (strain AAC00-1) (Acidovorax citrulli), this protein is Multifunctional CCA protein.